Consider the following 349-residue polypeptide: tRNA N6-adenosine threonylcarbamoyltransferase (349 aa).

The Fe cation site is built by histidine 113 and histidine 117. Residues 135–139, aspartate 169, glycine 182, aspartate 186, and asparagine 281 contribute to the substrate site; that span reads LVSGG. Aspartate 309 serves as a coordination point for Fe cation.

It belongs to the KAE1 / TsaD family. Fe(2+) is required as a cofactor.

The protein localises to the cytoplasm. It catalyses the reaction L-threonylcarbamoyladenylate + adenosine(37) in tRNA = N(6)-L-threonylcarbamoyladenosine(37) in tRNA + AMP + H(+). Its function is as follows. Required for the formation of a threonylcarbamoyl group on adenosine at position 37 (t(6)A37) in tRNAs that read codons beginning with adenine. Is involved in the transfer of the threonylcarbamoyl moiety of threonylcarbamoyl-AMP (TC-AMP) to the N6 group of A37, together with TsaE and TsaB. TsaD likely plays a direct catalytic role in this reaction. The chain is tRNA N6-adenosine threonylcarbamoyltransferase from Corynebacterium aurimucosum (strain ATCC 700975 / DSM 44827 / CIP 107346 / CN-1) (Corynebacterium nigricans).